The primary structure comprises 207 residues: Probable GTP-binding protein EngB (207 aa).

In terms of domain architecture, EngB-type G spans 24 to 199 (GGYEVAFAGR…RGIVGGWLGL (176 aa)). Residues 32 to 39 (GRSNAGKS), 59 to 63 (GRTQQ), 77 to 80 (DLPG), 144 to 147 (TKAD), and 178 to 180 (YSG) contribute to the GTP site. Residues serine 39 and threonine 61 each coordinate Mg(2+).

The protein belongs to the TRAFAC class TrmE-Era-EngA-EngB-Septin-like GTPase superfamily. EngB GTPase family. Mg(2+) is required as a cofactor.

Necessary for normal cell division and for the maintenance of normal septation. The polypeptide is Probable GTP-binding protein EngB (Xanthomonas campestris pv. campestris (strain 8004)).